A 291-amino-acid chain; its full sequence is Pyridoxal 5'-phosphate synthase subunit PdxS (291 aa).

Asp23 contacts D-ribose 5-phosphate. Lys80 serves as the catalytic Schiff-base intermediate with D-ribose 5-phosphate. Residue Gly152 coordinates D-ribose 5-phosphate. Position 164 (Arg164) interacts with D-glyceraldehyde 3-phosphate. D-ribose 5-phosphate contacts are provided by residues Gly213 and 234-235; that span reads GS.

The protein belongs to the PdxS/SNZ family. In the presence of PdxT, forms a dodecamer of heterodimers.

The catalysed reaction is aldehydo-D-ribose 5-phosphate + D-glyceraldehyde 3-phosphate + L-glutamine = pyridoxal 5'-phosphate + L-glutamate + phosphate + 3 H2O + H(+). The protein operates within cofactor biosynthesis; pyridoxal 5'-phosphate biosynthesis. In terms of biological role, catalyzes the formation of pyridoxal 5'-phosphate from ribose 5-phosphate (RBP), glyceraldehyde 3-phosphate (G3P) and ammonia. The ammonia is provided by the PdxT subunit. Can also use ribulose 5-phosphate and dihydroxyacetone phosphate as substrates, resulting from enzyme-catalyzed isomerization of RBP and G3P, respectively. In Clostridium acetobutylicum (strain ATCC 824 / DSM 792 / JCM 1419 / IAM 19013 / LMG 5710 / NBRC 13948 / NRRL B-527 / VKM B-1787 / 2291 / W), this protein is Pyridoxal 5'-phosphate synthase subunit PdxS.